Consider the following 395-residue polypeptide: Putative 8-amino-7-oxononanoate synthase (395 aa).

Arg23 is a substrate binding site. 110–111 serves as a coordination point for pyridoxal 5'-phosphate; the sequence is GY. A substrate-binding site is contributed by His135. Pyridoxal 5'-phosphate-binding positions include Ser182, 207–210, and 239–242; these read DEAH and TFSK. Residue Lys242 is modified to N6-(pyridoxal phosphate)lysine. Thr356 provides a ligand contact to substrate.

The protein belongs to the class-II pyridoxal-phosphate-dependent aminotransferase family. BioF subfamily. Homodimer. Pyridoxal 5'-phosphate serves as cofactor.

The catalysed reaction is 6-carboxyhexanoyl-[ACP] + L-alanine + H(+) = (8S)-8-amino-7-oxononanoate + holo-[ACP] + CO2. Its pathway is cofactor biosynthesis; biotin biosynthesis. Functionally, catalyzes the decarboxylative condensation of pimeloyl-[acyl-carrier protein] and L-alanine to produce 8-amino-7-oxononanoate (AON), [acyl-carrier protein], and carbon dioxide. The protein is Putative 8-amino-7-oxononanoate synthase (bioF) of Bacillus cereus (strain ZK / E33L).